The sequence spans 130 residues: Small ribosomal subunit protein uS8 (130 aa).

It belongs to the universal ribosomal protein uS8 family. In terms of assembly, part of the 30S ribosomal subunit. Contacts proteins S5 and S12.

One of the primary rRNA binding proteins, it binds directly to 16S rRNA central domain where it helps coordinate assembly of the platform of the 30S subunit. This is Small ribosomal subunit protein uS8 from Nitrosococcus oceani (strain ATCC 19707 / BCRC 17464 / JCM 30415 / NCIMB 11848 / C-107).